Consider the following 599-residue polypeptide: Elongation factor 4 (599 aa).

One can recognise a tr-type G domain in the interval 5–187; it reads SHIRNFSIIA…RLVTVIPAPE (183 aa). Residues 17-22 and 134-137 each bind GTP; these read DHGKST and NKMD.

This sequence belongs to the TRAFAC class translation factor GTPase superfamily. Classic translation factor GTPase family. LepA subfamily.

Its subcellular location is the cell inner membrane. It carries out the reaction GTP + H2O = GDP + phosphate + H(+). Functionally, required for accurate and efficient protein synthesis under certain stress conditions. May act as a fidelity factor of the translation reaction, by catalyzing a one-codon backward translocation of tRNAs on improperly translocated ribosomes. Back-translocation proceeds from a post-translocation (POST) complex to a pre-translocation (PRE) complex, thus giving elongation factor G a second chance to translocate the tRNAs correctly. Binds to ribosomes in a GTP-dependent manner. In Pseudomonas paraeruginosa (strain DSM 24068 / PA7) (Pseudomonas aeruginosa (strain PA7)), this protein is Elongation factor 4.